Consider the following 266-residue polypeptide: Pre-mRNA-splicing factor CWC26 (266 aa).

Disordered stretches follow at residues 1–37 and 118–149; these read MALHQYLSETYGPTKPKNKTKKKKKESKSDANSDKTS and TRKTIYRDAQGHKIQEDSKIDDSSFSRSKYED. A compositionally biased stretch (basic residues) spans 16 to 26; the sequence is PKNKTKKKKKE. Over residues 122 to 149 the composition is skewed to basic and acidic residues; it reads IYRDAQGHKIQEDSKIDDSSFSRSKYED.

The protein belongs to the CWC26 family. As to quaternary structure, belongs to the pre-mRNA retention and splicing (RES) complex composed of at least BUD13, IST3 and PML1. May also belong to the CWC complex (or CEF1-associated complex) composed of the U2, U5 and U6 snRNAs and at least BUD13, BUD31, BRR2, CDC40, CEF1, CLF1, CUS1, CWC2, CWC15, CWC21, CWC22, CWC23, CWC24, CWC25, CWC27, ECM2, HSH155, IST3, ISY1, LEA1, MSL1, NTC20, PRP8, PRP9, PRP11, PRP19, PRP21, PRP22, PRP45, PRP46, SLU7, SMB1, SMD1, SMD2, SMD3, SMX2, SMX3, SNT309, SNU114, SPP2, SYF1, SYF2, RSE1 and YJU2. Interacts with IST3 and PML1.

Its subcellular location is the cytoplasm. It localises to the nucleus. Its function is as follows. Required for efficient splicing and pre-mRNA nuclear retention. May also be involved in positioning the proximal bud pole signal. This chain is Pre-mRNA-splicing factor CWC26 (BUD13), found in Saccharomyces cerevisiae (strain ATCC 204508 / S288c) (Baker's yeast).